Here is a 644-residue protein sequence, read N- to C-terminus: 1-deoxy-D-xylulose-5-phosphate synthase (644 aa).

Thiamine diphosphate-binding positions include H78 and 120-122; that span reads GHA. Residue D149 coordinates Mg(2+). Residues 150–151, N178, and E373 contribute to the thiamine diphosphate site; that span reads AA. N178 contacts Mg(2+).

It belongs to the transketolase family. DXPS subfamily. In terms of assembly, homodimer. Requires Mg(2+) as cofactor. The cofactor is thiamine diphosphate.

The enzyme catalyses D-glyceraldehyde 3-phosphate + pyruvate + H(+) = 1-deoxy-D-xylulose 5-phosphate + CO2. The protein operates within metabolic intermediate biosynthesis; 1-deoxy-D-xylulose 5-phosphate biosynthesis; 1-deoxy-D-xylulose 5-phosphate from D-glyceraldehyde 3-phosphate and pyruvate: step 1/1. Functionally, catalyzes the acyloin condensation reaction between C atoms 2 and 3 of pyruvate and glyceraldehyde 3-phosphate to yield 1-deoxy-D-xylulose-5-phosphate (DXP). The chain is 1-deoxy-D-xylulose-5-phosphate synthase from Chlamydia abortus (strain DSM 27085 / S26/3) (Chlamydophila abortus).